Reading from the N-terminus, the 194-residue chain is dTTP/UTP pyrophosphatase (194 aa).

Asp-76 acts as the Proton acceptor in catalysis.

This sequence belongs to the Maf family. YhdE subfamily. A divalent metal cation is required as a cofactor.

The protein resides in the cytoplasm. It catalyses the reaction dTTP + H2O = dTMP + diphosphate + H(+). The enzyme catalyses UTP + H2O = UMP + diphosphate + H(+). Functionally, nucleoside triphosphate pyrophosphatase that hydrolyzes dTTP and UTP. May have a dual role in cell division arrest and in preventing the incorporation of modified nucleotides into cellular nucleic acids. This is dTTP/UTP pyrophosphatase from Shewanella sp. (strain MR-7).